Consider the following 290-residue polypeptide: Putative speedy protein-like protein 3 (290 aa).

The interval 16 to 50 (GVDPSPPCRSLGWKRKKEWSDESEEEPEKELAPEP) is disordered. The span at 36–50 (DESEEEPEKELAPEP) shows a compositional bias: acidic residues.

This sequence belongs to the Speedy/Ringo family.

This chain is Putative speedy protein-like protein 3, found in Homo sapiens (Human).